The following is a 696-amino-acid chain: Chitin synthase regulator SKT5 (696 aa).

2 disordered regions span residues 37–67 (GQDFSDNKENRENRDNEDFSTADLPKRSANQ) and 90–145 (QEED…IKKR). A compositionally biased stretch (basic and acidic residues) spans 41 to 53 (SDNKENRENRDNE). A compositionally biased stretch (low complexity) spans 104 to 126 (LNNSNNTSLSSLGSTPTNSPSPG). A compositionally biased stretch (polar residues) spans 129 to 139 (RQTNSSTSLTK). Ser-148 is modified (phosphoserine). 7 Sel1-like repeats span residues 271–306 (SDAQYLLADGYSSGAFGKIENKEAFVLFQAAAKHGH), 307–342 (IESAYRASHCLEEGLGTTRDSRKSVNFLKFAASRNH), 343–382 (PSAMYKLGLYSFYGRMGLPTDVNTKLNGVKWLSRAAARAN), 386–423 (AAAPYELAKIYHEGFLDVVIPDEKYAMELYIQAASLGH), 424–460 (VPSATLLAQIYETGNDTVGQDTSLSVHYYTQAALKGD), 461–498 (SVAMLGLCAWYLLGAEPAFEKDENEAFQWALRAANAGL), and 499–534 (PKAQFTLGYFYEHGKGCDRNMEYAWKWYEKAAGNED). Ser-561 and Ser-563 each carry phosphoserine. Thr-564 carries the phosphothreonine modification. Composition is skewed to polar residues over residues 576–593 (SNVGSNSRVSSKSETFFT), 605–634 (LQINMNSNTNRNGIKTGSDTSIRKSSSSAK), and 651–661 (VSLSNMGSSNM). The interval 576-696 (SNVGSNSRVS…GKKKKDCVIM (121 aa)) is disordered. The span at 662 to 675 (IRKDFPAVKTESKK) shows a compositional bias: basic and acidic residues. Residues 680–696 (KNKKDKQGKKKKDCVIM) are compositionally biased toward basic residues. Residue Cys-693 is modified to Cysteine methyl ester. A lipid anchor (S-farnesyl cysteine) is attached at Cys-693. The propeptide at 694–696 (VIM) is removed in mature form.

It belongs to the SKT5 family. As to quaternary structure, may interact with CHS3 and seems to be an adapter (along with BNI4) to link CHS3 to septins. In terms of processing, farnesylation is required for chitin synthase CHS3 activity but is not required for SKT5 membrane association.

Its subcellular location is the cell membrane. Its function is as follows. Activator of the chitin synthase CHS3 which polymerizes chitin, a structural polymer of the fungal cell wall. In Saccharomyces cerevisiae (strain ATCC 204508 / S288c) (Baker's yeast), this protein is Chitin synthase regulator SKT5.